The following is an 82-amino-acid chain: Small ribosomal subunit protein bS18 (82 aa).

This sequence belongs to the bacterial ribosomal protein bS18 family. In terms of assembly, part of the 30S ribosomal subunit. Forms a tight heterodimer with protein bS6.

Functionally, binds as a heterodimer with protein bS6 to the central domain of the 16S rRNA, where it helps stabilize the platform of the 30S subunit. The sequence is that of Small ribosomal subunit protein bS18 from Chlamydia felis (strain Fe/C-56) (Chlamydophila felis).